Here is a 410-residue protein sequence, read N- to C-terminus: Solute carrier family 52, riboflavin transporter, member 3 (410 aa).

3 helical membrane passes run 3 to 23 (ILIY…INGL), 40 to 60 (LPSY…LVTL), and 73 to 93 (VVIY…AFFL). Asparagine 157 carries N-linked (GlcNAc...) asparagine glycosylation. 6 helical membrane-spanning segments follow: residues 158 to 178 (FTTE…LAAF), 239 to 259 (FQLT…NGLL), 277 to 297 (LSAA…MFFP), 301 to 321 (LVFL…NMAM), 334 to 354 (ALGE…LSYV), and 369 to 389 (ALVW…VIMF).

Belongs to the riboflavin transporter family.

It is found in the cell membrane. It carries out the reaction riboflavin(in) = riboflavin(out). Plasma membrane transporter mediating the uptake by cells of the water soluble vitamin B2/riboflavin that plays a key role in biochemical oxidation-reduction reactions of the carbohydrate, lipid, and amino acid metabolism. The chain is Solute carrier family 52, riboflavin transporter, member 3 (slc52a3) from Osmerus mordax (Rainbow smelt).